A 407-amino-acid chain; its full sequence is MGDNLMDKVTAFGERLKIGGSEVSNKISAGVSSMSFKVKELFQGPNPTDKIVEDATTENLEEPDWDMNLEICDMINQETINSVELIRGIKKRIMMKQPRIQYLALVLLETCVKNCEKAFSEVAAERVLDEMVKLIDDPQTVVNNRNKALMLIEAWGESTSELRYLPVFEETYKSLKARGIRFPGRDNESLAPIFTPARSTPAPELNADLPQHVHEPAHIQYDVPVRSFTAEQTKEAFDIARNSIELLSTVLSSSPQHDALQDDLTTTLVQQCRQSQTTVQRIIETAGENEALLFEALNVNDELVKTLSKYEEMNKPSAPLTSHEPAMIPVAEEPDDSPIHGREESLVRKSSGVRGGFHGGGGSGDDMMDDLDEMIFGKKNGCDSSTNPDHDPKKEQSSSKNDDLIRF.

An N-acetylglycine modification is found at G2. A VHS domain is found at 55–183; it reads ATTENLEEPD…SLKARGIRFP (129 aa). Positions 228–315 constitute a GAT domain; the sequence is FTAEQTKEAF…TLSKYEEMNK (88 aa). The tract at residues 315-407 is disordered; sequence KPSAPLTSHE…SSKNDDLIRF (93 aa). S337 is subject to Phosphoserine. A compositionally biased stretch (basic and acidic residues) spans 337 to 347; sequence SPIHGREESLV. Gly residues predominate over residues 353-364; the sequence is VRGGFHGGGGSG. Positions 388-407 are enriched in basic and acidic residues; it reads PDHDPKKEQSSSKNDDLIRF.

This sequence belongs to the TOM1 family. In terms of tissue distribution, ubiquitously expressed.

It is found in the membrane. In terms of biological role, might contribute to the loading of the ESCRT machinery. In Arabidopsis thaliana (Mouse-ear cress), this protein is TOM1-like protein 1.